A 292-amino-acid chain; its full sequence is Ribosomal protein L11 methyltransferase (292 aa).

4 residues coordinate S-adenosyl-L-methionine: T144, G165, D187, and N229.

This sequence belongs to the methyltransferase superfamily. PrmA family.

It is found in the cytoplasm. The catalysed reaction is L-lysyl-[protein] + 3 S-adenosyl-L-methionine = N(6),N(6),N(6)-trimethyl-L-lysyl-[protein] + 3 S-adenosyl-L-homocysteine + 3 H(+). In terms of biological role, methylates ribosomal protein L11. The polypeptide is Ribosomal protein L11 methyltransferase (Pseudomonas putida (strain GB-1)).